Reading from the N-terminus, the 194-residue chain is Recombination protein RecR (194 aa).

A C4-type zinc finger spans residues 52–67; it reads CTECRTFTEEEVCHIC. Residues 76–171 form the Toprim domain; the sequence is GQICVVESPA…EASRIAHGVP (96 aa).

Belongs to the RecR family.

In terms of biological role, may play a role in DNA repair. It seems to be involved in an RecBC-independent recombinational process of DNA repair. It may act with RecF and RecO. This Vibrio campbellii (strain ATCC BAA-1116) protein is Recombination protein RecR.